A 189-amino-acid chain; its full sequence is Elongation factor P (189 aa).

Lys-34 bears the N6-(3,6-diaminohexanoyl)-5-hydroxylysine mark.

The protein belongs to the elongation factor P family. In terms of processing, may be beta-lysylated on the epsilon-amino group of Lys-34 by the combined action of EpmA and EpmB, and then hydroxylated on the C5 position of the same residue by EpmC (if this protein is present). Lysylation is critical for the stimulatory effect of EF-P on peptide-bond formation. The lysylation moiety may extend toward the peptidyltransferase center and stabilize the terminal 3-CCA end of the tRNA. Hydroxylation of the C5 position on Lys-34 may allow additional potential stabilizing hydrogen-bond interactions with the P-tRNA.

Its subcellular location is the cytoplasm. It functions in the pathway protein biosynthesis; polypeptide chain elongation. Functionally, involved in peptide bond synthesis. Alleviates ribosome stalling that occurs when 3 or more consecutive Pro residues or the sequence PPG is present in a protein, possibly by augmenting the peptidyl transferase activity of the ribosome. Modification of Lys-34 is required for alleviation. This Acinetobacter baumannii (strain AB307-0294) protein is Elongation factor P.